A 288-amino-acid polypeptide reads, in one-letter code: ATP synthase gamma chain (288 aa).

It belongs to the ATPase gamma chain family. In terms of assembly, F-type ATPases have 2 components, CF(1) - the catalytic core - and CF(0) - the membrane proton channel. CF(1) has five subunits: alpha(3), beta(3), gamma(1), delta(1), epsilon(1). CF(0) has three main subunits: a, b and c.

Its subcellular location is the cell inner membrane. Its function is as follows. Produces ATP from ADP in the presence of a proton gradient across the membrane. The gamma chain is believed to be important in regulating ATPase activity and the flow of protons through the CF(0) complex. The protein is ATP synthase gamma chain of Rickettsia canadensis (strain McKiel).